Here is a 250-residue protein sequence, read N- to C-terminus: 2,3-bisphosphoglycerate-dependent phosphoglycerate mutase (250 aa).

Residues Arg-8–Asn-15, Thr-21–Gly-22, Arg-60, Glu-87–Tyr-90, Lys-98, Arg-114–Arg-115, and Gly-183–Asn-184 each bind substrate. The Tele-phosphohistidine intermediate role is filled by His-9. The active-site Proton donor/acceptor is Glu-87.

Belongs to the phosphoglycerate mutase family. BPG-dependent PGAM subfamily. As to quaternary structure, homodimer.

The enzyme catalyses (2R)-2-phosphoglycerate = (2R)-3-phosphoglycerate. The protein operates within carbohydrate degradation; glycolysis; pyruvate from D-glyceraldehyde 3-phosphate: step 3/5. Functionally, catalyzes the interconversion of 2-phosphoglycerate and 3-phosphoglycerate. This Nitratidesulfovibrio vulgaris (strain DP4) (Desulfovibrio vulgaris) protein is 2,3-bisphosphoglycerate-dependent phosphoglycerate mutase.